The primary structure comprises 441 residues: Xaa-Pro dipeptidase (441 aa).

Aspartate 244, aspartate 255, histidine 336, glutamate 381, and glutamate 420 together coordinate Mn(2+).

Belongs to the peptidase M24B family. Bacterial-type prolidase subfamily. It depends on Mn(2+) as a cofactor.

It catalyses the reaction Xaa-L-Pro dipeptide + H2O = an L-alpha-amino acid + L-proline. Splits dipeptides with a prolyl residue in the C-terminal position. The protein is Xaa-Pro dipeptidase of Xanthomonas campestris pv. campestris (strain 8004).